A 350-amino-acid polypeptide reads, in one-letter code: Small ribosomal subunit biogenesis GTPase RsgA (350 aa).

Polar residues predominate over residues 1 to 17 (MSKNKLSKGQQRRVNAN). Residues 1–33 (MSKNKLSKGQQRRVNANHQRRLKTSKEKPDYDD) are disordered. Residues 104-273 (TSVLTRPDFY…VIDSPGVREF (170 aa)) enclose the CP-type G domain. Residues 160-163 (NKID) and 214-222 (GQSGVGKSS) contribute to the GTP site. Residues Cys297, Cys302, His304, and Cys310 each coordinate Zn(2+).

This sequence belongs to the TRAFAC class YlqF/YawG GTPase family. RsgA subfamily. Monomer. Associates with 30S ribosomal subunit, binds 16S rRNA. Zn(2+) serves as cofactor.

The protein localises to the cytoplasm. Its function is as follows. One of several proteins that assist in the late maturation steps of the functional core of the 30S ribosomal subunit. Helps release RbfA from mature subunits. May play a role in the assembly of ribosomal proteins into the subunit. Circularly permuted GTPase that catalyzes slow GTP hydrolysis, GTPase activity is stimulated by the 30S ribosomal subunit. In Shigella boydii serotype 18 (strain CDC 3083-94 / BS512), this protein is Small ribosomal subunit biogenesis GTPase RsgA.